The chain runs to 220 residues: uncharacterized protein (220 aa).

This is an uncharacterized protein from Schizosaccharomyces pombe (strain 972 / ATCC 24843) (Fission yeast).